The chain runs to 142 residues: uncharacterized protein (142 aa).

This sequence belongs to the IIV-3 015R family.

This is an uncharacterized protein from Aedes vexans (Inland floodwater mosquito).